A 244-amino-acid chain; its full sequence is tRNA pseudouridine synthase A 2 (244 aa).

The Nucleophile role is filled by D52. Y110 is a substrate binding site.

Belongs to the tRNA pseudouridine synthase TruA family. Homodimer.

The catalysed reaction is uridine(38/39/40) in tRNA = pseudouridine(38/39/40) in tRNA. Its function is as follows. Formation of pseudouridine at positions 38, 39 and 40 in the anticodon stem and loop of transfer RNAs. This is tRNA pseudouridine synthase A 2 from Clostridium perfringens (strain 13 / Type A).